The primary structure comprises 97 residues: Large ribosomal subunit protein bL28 (97 aa).

Belongs to the bacterial ribosomal protein bL28 family.

In Rickettsia canadensis (strain McKiel), this protein is Large ribosomal subunit protein bL28.